The sequence spans 272 residues: Glutamate racemase (272 aa).

Substrate is bound by residues 16–17 and 48–49; these read DS and YG. The active-site Proton donor/acceptor is the cysteine 79. 80–81 is a substrate binding site; sequence NT. The active-site Proton donor/acceptor is the cysteine 191. 192–193 is a binding site for substrate; sequence TH.

This sequence belongs to the aspartate/glutamate racemases family.

The catalysed reaction is L-glutamate = D-glutamate. The protein operates within cell wall biogenesis; peptidoglycan biosynthesis. Its function is as follows. Provides the (R)-glutamate required for cell wall biosynthesis. This is Glutamate racemase from Chlorobaculum tepidum (strain ATCC 49652 / DSM 12025 / NBRC 103806 / TLS) (Chlorobium tepidum).